Consider the following 291-residue polypeptide: uncharacterized protein (291 aa).

A disordered region spans residues 1 to 55 (MRTHDIPRSPLVGHKKNAAPDGIGASRACCPARENEPFKKGSTNSRGGGVEWSRS). 2 helical membrane-spanning segments follow: residues 74–96 (WWAVGPVLGICAGVWGAAHPVHA) and 188–210 (YYYLAIPVALTAGYTVAFWRIRL).

It to T.pallidum TP_0733.

Its subcellular location is the cell membrane. This is an uncharacterized protein from Treponema pallidum (strain Nichols).